A 965-amino-acid chain; its full sequence is Collagenase ColQ1 (965 aa).

The N-terminal stretch at 1–30 is a signal peptide; it reads MNKKSKINKVMLSISTMALSLGALQAPASA. Residues 31–93 constitute a propeptide that is removed on maturation; that stretch reads EEKVPYNVLK…KAAVKQVKES (63 aa). The interval 94–366 is activator domain; sequence YSMADLNKMN…AVEQITTNYN (273 aa). Residues 94–765 are S1 metalloprotease domain; the sequence is YSMADLNKMN…VFHGIAKDDG (672 aa). The segment at 376–645 is catalytic subdomain; the sequence is DLEKIRKEGK…MQQLIDNQDK (270 aa). Histidine 501 serves as a coordination point for Zn(2+). Residue glutamate 502 is part of the active site. Histidine 505 and glutamate 533 together coordinate Zn(2+). The interval 653–765 is helper subdomain; that stretch reads DDYLAEHAPK…VFHGIAKDDG (113 aa). The PKD domain occupies 769–850; the sequence is APTVNINGPY…ESKSETTVTV (82 aa). A disordered region spans residues 842–867; that stretch reads SKSETTVTVKDGSLTESEPNNRPEEA. Positions 845–859 are enriched in polar residues; the sequence is ETTVTVKDGSLTESE. The collagen-binding domain stretch occupies residues 853–965; the sequence is GSLTESEPNN…GDGTYKLSVK (113 aa).

It belongs to the peptidase M9B family. Collagenase subfamily. The cofactor is Ca(2+). Zn(2+) serves as cofactor.

The protein localises to the secreted. The enzyme catalyses Digestion of native collagen in the triple helical region at Xaa-|-Gly bonds. With synthetic peptides, a preference is shown for Gly at P3 and P1', Pro and Ala at P2 and P2', and hydroxyproline, Ala or Arg at P3'.. With respect to regulation, strongly inhibited by EDTA. Not inhibited by E-64 and PMSF, broad-spectrum cysteine and serine protease inhibitors. In terms of biological role, acts as a true collagenase, which is highly active and cleaves natively folded collagen. In vitro, can also cleave gelatin and the synthetic peptide FALGPA (furylacryloyl-Leu-Gly-Pro-Ala). Causes damage on dermal collagen (COL), resulting in gaps in the tissue, which might lead to an accelerated bacterial infiltration and penetration into deeper sites of the host. This is Collagenase ColQ1 from Bacillus cereus (strain Q1).